A 341-amino-acid chain; its full sequence is Inositol monophosphatase 3 (341 aa).

A helical membrane pass occupies residues 11-31 (LGIAVFCLLGVGVIYHLYAGV). The Mg(2+) site is built by Glu117, Asp157, Leu159, Asp160, and Asp283. Glu117 contributes to the substrate binding site. Substrate is bound by residues 159–162 (LDAT) and Asp283.

Belongs to the inositol monophosphatase superfamily. Requires Mg(2+) as cofactor.

It localises to the membrane. It carries out the reaction a myo-inositol phosphate + H2O = myo-inositol + phosphate. The protein operates within polyol metabolism; myo-inositol biosynthesis; myo-inositol from D-glucose 6-phosphate: step 2/2. This Danio rerio (Zebrafish) protein is Inositol monophosphatase 3 (bpnt2).